Reading from the N-terminus, the 436-residue chain is Glutamyl-tRNA reductase (436 aa).

Substrate-binding positions include 49–52 (TCNR), S109, 114–116 (EGQ), and Q120. C50 serves as the catalytic Nucleophile. NADP(+) is bound at residue 198–203 (GAGRMS).

The protein belongs to the glutamyl-tRNA reductase family. In terms of assembly, homodimer.

The enzyme catalyses (S)-4-amino-5-oxopentanoate + tRNA(Glu) + NADP(+) = L-glutamyl-tRNA(Glu) + NADPH + H(+). Its pathway is porphyrin-containing compound metabolism; protoporphyrin-IX biosynthesis; 5-aminolevulinate from L-glutamyl-tRNA(Glu): step 1/2. It participates in porphyrin-containing compound metabolism; chlorophyll biosynthesis. Its function is as follows. Catalyzes the NADPH-dependent reduction of glutamyl-tRNA(Glu) to glutamate 1-semialdehyde (GSA). In Prochlorococcus marinus (strain MIT 9303), this protein is Glutamyl-tRNA reductase.